Reading from the N-terminus, the 168-residue chain is Cytochrome c-type biogenesis protein CcmE (168 aa).

At 1-23 (MTTAPSGLPGTPLPPARRRERPR) the chain is on the cytoplasmic side. Residues 24–44 (WPLLVAGAAVLGLIGYMVLGN) traverse the membrane as a helical; Signal-anchor for type II membrane protein segment. Over 45 to 168 (ANSNLVYYVL…KILNDQSTKP (124 aa)) the chain is Extracellular. H137 and Y141 together coordinate heme. The tract at residues 145 to 168 (DSKGEGQYSQDDLKKILNDQSTKP) is disordered.

The protein belongs to the CcmE/CycJ family.

The protein localises to the cell membrane. Heme chaperone required for the biogenesis of c-type cytochromes. Transiently binds heme delivered by CcmC and transfers the heme to apo-cytochromes in a process facilitated by CcmF and CcmH. In Deinococcus radiodurans (strain ATCC 13939 / DSM 20539 / JCM 16871 / CCUG 27074 / LMG 4051 / NBRC 15346 / NCIMB 9279 / VKM B-1422 / R1), this protein is Cytochrome c-type biogenesis protein CcmE.